A 363-amino-acid polypeptide reads, in one-letter code: NADH-quinone oxidoreductase subunit H (363 aa).

A run of 10 helical transmembrane segments spans residues 29–49 (VLKILLIAVPVIVTVAFYVVW), 62–82 (GPMYVGMGIFQAFADVFKLLF), 96–116 (FIIAPLLTLAPAFAAWSVVPF), 127–147 (VGLLYLLAMTSLGVYGIILAG), 163–183 (AAQVVSYEIAMGFALVGVMIA), 202–222 (FFDWFLIPLFPLFIVYWVSGV), 239–257 (IVAGHMVEYSGGAFALFFL), 264–286 (ILVSFLISIFFLGGWLSPIQGWV), 299–319 (TGGWPWLLMKVFFFASAYIWF), and 339–359 (FIPLTIVWIAVTALMVFYGVI).

It belongs to the complex I subunit 1 family. NDH-1 is composed of 14 different subunits. Subunits NuoA, H, J, K, L, M, N constitute the membrane sector of the complex.

The protein resides in the cell inner membrane. The catalysed reaction is a quinone + NADH + 5 H(+)(in) = a quinol + NAD(+) + 4 H(+)(out). NDH-1 shuttles electrons from NADH, via FMN and iron-sulfur (Fe-S) centers, to quinones in the respiratory chain. The immediate electron acceptor for the enzyme in this species is believed to be ubiquinone. Couples the redox reaction to proton translocation (for every two electrons transferred, four hydrogen ions are translocated across the cytoplasmic membrane), and thus conserves the redox energy in a proton gradient. This subunit may bind ubiquinone. This Xanthomonas campestris pv. campestris (strain B100) protein is NADH-quinone oxidoreductase subunit H.